The chain runs to 704 residues: Matrix metalloproteinase-9 (704 aa).

The signal sequence occupies residues 1–19; it reads MSPRQPLVLVFLVLGCCSA. Residues 20–106 constitute a propeptide, activation peptide; the sequence is APRPHKPTVV…PRCGVPDLGK (87 aa). An N-linked (GlcNAc...) asparagine glycan is attached at N38. The Cysteine switch motif lies at 97–104; it reads PRCGVPDL. C99 is a Zn(2+) binding site. N-linked (GlcNAc...) asparagine glycosylation is present at N127. Ca(2+) contacts are provided by D131 and D165. Zn(2+) is bound by residues H175 and D177. Ca(2+) contacts are provided by D182, G183, N185, and L187. H190 contacts Zn(2+). Positions 197, 199, and 201 each coordinate Ca(2+). Position 203 (H203) interacts with Zn(2+). Residues D205, D206, and E208 each contribute to the Ca(2+) site. Fibronectin type-II domains are found at residues 225–273, 283–331, and 342–390; these read ADGA…FCPS, GDGK…FCPT, and SAGE…FCPD. 6 cysteine pairs are disulfide-bonded: C230/C256, C244/C271, C288/C314, C302/C329, C347/C373, and C361/C388. H401 contacts Zn(2+). E402 is an active-site residue. Positions 405 and 411 each coordinate Zn(2+). A disordered region spans residues 434 to 507; the sequence is DDVRGIQHLY…PSEAPTVPVD (74 aa). Pro residues-rich tracts occupy residues 450–461 and 483–496; these read EPQPPTAPPTAP and TGPP…PPTA. A disulfide bridge connects residues C513 and C701. 4 Hemopexin repeats span residues 515–560, 561–605, 607–654, and 655–701; these read VNIF…WPAL, PRKL…GLGP, VTQV…YPGV, and PLNT…ILQC.

Belongs to the peptidase M10A family. In terms of assembly, exists as monomer or homodimer; disulfide-linked. Also exists as heterodimer with LCN2. Macrophages and transformed cell lines produce only the monomeric form. Interacts with ECM1. Zn(2+) serves as cofactor. Ca(2+) is required as a cofactor. Post-translationally, N- and O-glycosylated.

It localises to the secreted. The protein localises to the extracellular space. The protein resides in the extracellular matrix. The enzyme catalyses Cleavage of gelatin types I and V and collagen types IV and V.. Its function is as follows. Matrix metalloproteinase that plays an essential role in local proteolysis of the extracellular matrix and in leukocyte migration. Could play a role in bone osteoclastic resorption. Cleaves KiSS1 at a Gly-|-Leu bond. Cleaves NINJ1 to generate the Secreted ninjurin-1 form. Cleaves type IV and type V collagen into large C-terminal three quarter fragments and shorter N-terminal one quarter fragments. Degrades fibronectin but not laminin or Pz-peptide. This is Matrix metalloproteinase-9 (MMP9) from Canis lupus familiaris (Dog).